The sequence spans 788 residues: Endonuclease MutS2 (788 aa).

Residue Gly-334–Thr-341 participates in ATP binding. In terms of domain architecture, Smr spans Leu-713 to Gln-788.

It belongs to the DNA mismatch repair MutS family. MutS2 subfamily. As to quaternary structure, homodimer. Binds to stalled ribosomes, contacting rRNA.

In terms of biological role, endonuclease that is involved in the suppression of homologous recombination and thus may have a key role in the control of bacterial genetic diversity. Acts as a ribosome collision sensor, splitting the ribosome into its 2 subunits. Detects stalled/collided 70S ribosomes which it binds and splits by an ATP-hydrolysis driven conformational change. Acts upstream of the ribosome quality control system (RQC), a ribosome-associated complex that mediates the extraction of incompletely synthesized nascent chains from stalled ribosomes and their subsequent degradation. Probably generates substrates for RQC. This Enterococcus faecalis (strain ATCC 700802 / V583) protein is Endonuclease MutS2.